We begin with the raw amino-acid sequence, 140 residues long: uncharacterized protein (140 aa).

This is an uncharacterized protein from Sinorhizobium fredii (strain NBRC 101917 / NGR234).